The following is a 409-amino-acid chain: Putative competence-damage inducible protein (409 aa).

This sequence belongs to the CinA family.

This is Putative competence-damage inducible protein from Clostridium botulinum (strain Langeland / NCTC 10281 / Type F).